A 96-amino-acid chain; its full sequence is Co-chaperonin GroES (96 aa).

It belongs to the GroES chaperonin family. Heptamer of 7 subunits arranged in a ring. Interacts with the chaperonin GroEL.

The protein localises to the cytoplasm. Together with the chaperonin GroEL, plays an essential role in assisting protein folding. The GroEL-GroES system forms a nano-cage that allows encapsulation of the non-native substrate proteins and provides a physical environment optimized to promote and accelerate protein folding. GroES binds to the apical surface of the GroEL ring, thereby capping the opening of the GroEL channel. This is Co-chaperonin GroES from Solidesulfovibrio magneticus (strain ATCC 700980 / DSM 13731 / RS-1) (Desulfovibrio magneticus).